Consider the following 137-residue polypeptide: Large ribosomal subunit protein uL16 (137 aa).

It belongs to the universal ribosomal protein uL16 family. Part of the 50S ribosomal subunit.

Functionally, binds 23S rRNA and is also seen to make contacts with the A and possibly P site tRNAs. The protein is Large ribosomal subunit protein uL16 of Spiroplasma citri.